The following is a 556-amino-acid chain: Formate--tetrahydrofolate ligase 1 (556 aa).

Position 65–72 (65–72) interacts with ATP; sequence TPAGEGKS.

Belongs to the formate--tetrahydrofolate ligase family.

The catalysed reaction is (6S)-5,6,7,8-tetrahydrofolate + formate + ATP = (6R)-10-formyltetrahydrofolate + ADP + phosphate. The protein operates within one-carbon metabolism; tetrahydrofolate interconversion. The chain is Formate--tetrahydrofolate ligase 1 from Streptococcus pyogenes serotype M1.